We begin with the raw amino-acid sequence, 196 residues long: RNA pyrophosphohydrolase (196 aa).

Positions Gly-6–Lys-149 constitute a Nudix hydrolase domain. The Nudix box signature appears at Gly-38–Gly-59. A disordered region spans residues Ser-166–Gln-196. A compositionally biased stretch (polar residues) spans Arg-167–Lys-184. Residues Tyr-185–Gln-196 are compositionally biased toward basic residues.

Belongs to the Nudix hydrolase family. RppH subfamily. A divalent metal cation is required as a cofactor.

Functionally, accelerates the degradation of transcripts by removing pyrophosphate from the 5'-end of triphosphorylated RNA, leading to a more labile monophosphorylated state that can stimulate subsequent ribonuclease cleavage. The sequence is that of RNA pyrophosphohydrolase from Haemophilus influenzae (strain 86-028NP).